The chain runs to 118 residues: Aspartate 1-decarboxylase (118 aa).

Ser-25 (schiff-base intermediate with substrate; via pyruvic acid) is an active-site residue. A Pyruvic acid (Ser) modification is found at Ser-25. Residue Thr-57 participates in substrate binding. Tyr-58 serves as the catalytic Proton donor. 73–75 (GAA) is a binding site for substrate.

It belongs to the PanD family. Heterooctamer of four alpha and four beta subunits. The cofactor is pyruvate. Is synthesized initially as an inactive proenzyme, which is activated by self-cleavage at a specific serine bond to produce a beta-subunit with a hydroxyl group at its C-terminus and an alpha-subunit with a pyruvoyl group at its N-terminus.

It is found in the cytoplasm. It catalyses the reaction L-aspartate + H(+) = beta-alanine + CO2. It functions in the pathway cofactor biosynthesis; (R)-pantothenate biosynthesis; beta-alanine from L-aspartate: step 1/1. Catalyzes the pyruvoyl-dependent decarboxylation of aspartate to produce beta-alanine. In Caulobacter vibrioides (strain ATCC 19089 / CIP 103742 / CB 15) (Caulobacter crescentus), this protein is Aspartate 1-decarboxylase.